Consider the following 302-residue polypeptide: N-acetyl-D-glucosamine kinase (302 aa).

ATP-binding positions include 4–11 (GFDIGGTK) and 133–139 (GGGGLVL). Zn(2+) contacts are provided by His-156, Cys-176, Cys-178, and Cys-183.

Belongs to the ROK (NagC/XylR) family. NagK subfamily.

It carries out the reaction N-acetyl-D-glucosamine + ATP = N-acetyl-D-glucosamine 6-phosphate + ADP + H(+). The protein operates within cell wall biogenesis; peptidoglycan recycling. In terms of biological role, catalyzes the phosphorylation of N-acetyl-D-glucosamine (GlcNAc) derived from cell-wall degradation, yielding GlcNAc-6-P. The polypeptide is N-acetyl-D-glucosamine kinase (Salmonella typhi).